A 439-amino-acid chain; its full sequence is Phenylacetate-coenzyme A ligase (439 aa).

This sequence belongs to the phenylacetyl-CoA ligase family. As to quaternary structure, monomer.

It carries out the reaction 2-phenylacetate + ATP + CoA = phenylacetyl-CoA + AMP + diphosphate. The protein operates within aromatic compound metabolism; phenylacetate degradation. Its activity is regulated as follows. Inhibited by divalent cations (zinc, copper, mercury) and by the sulfhydryl reagents 5,5-dithiobis(2-nitrobenzoic acid), N-ethylmaleimide and p-chloromercuribenzoate. In terms of biological role, catalyzes the activation of phenylacetic acid (PA) to phenylacetyl-CoA (PA-CoA). Involved in the phenylalanine metabolism. Can also use CTP and UTP as substrate. In Pseudomonas putida (Arthrobacter siderocapsulatus), this protein is Phenylacetate-coenzyme A ligase (paaK).